We begin with the raw amino-acid sequence, 213 residues long: MNKVLIVDDHLVVREGLKLLIETNDQYTIIGEAENGKVAVRLADELEPDIILMDLYMPEMSGLEAIKQIKEKHDTPIIILTTYNEDHLMIEGIELGAKGYLLKDTSSETLFHTMDAAIRGNVLLQPDILKRLQEIQFERMKKQRNETQLTEKEVIVLKAIAKGLKSKAIAFDLGVSERTVKSRLTSIYNKLGANSRTEAVTIAMQKGILTIDN.

The region spanning 3 to 118 (KVLIVDDHLV…TLFHTMDAAI (116 aa)) is the Response regulatory domain. Asp54 bears the 4-aspartylphosphate mark. In terms of domain architecture, HTH luxR-type spans 142 to 207 (KQRNETQLTE…EAVTIAMQKG (66 aa)). Residues 166–185 (SKAIAFDLGVSERTVKSRLT) constitute a DNA-binding region (H-T-H motif).

In terms of processing, phosphorylated by YdfH.

Its subcellular location is the cytoplasm. Member of the two-component regulatory system YdfH/YdfI. Regulates the transcription of ydfJ by binding to its promoter region. The protein is Transcriptional regulatory protein YdfI (ydfI) of Bacillus subtilis (strain 168).